Consider the following 208-residue polypeptide: uncharacterized protein (208 aa).

The interval lysine 124 to alanine 208 is disordered. The segment covering threonine 133–glutamate 170 has biased composition (basic and acidic residues).

The protein resides in the golgi apparatus. This is an uncharacterized protein from Encephalitozoon cuniculi (strain GB-M1) (Microsporidian parasite).